The primary structure comprises 82 residues: RNA-binding protein KhpA (82 aa).

Residues 35–82 (STILELRVSQSDVGKIIGRRGRIARAIRTLLGACAAKTNRRVQLEILD) form the KH domain.

Belongs to the KhpA RNA-binding protein family. In terms of assembly, forms a complex with KhpB.

Its subcellular location is the cytoplasm. In terms of biological role, a probable RNA chaperone. Forms a complex with KhpB which binds to cellular RNA and controls its expression. Plays a role in peptidoglycan (PG) homeostasis and cell length regulation. The chain is RNA-binding protein KhpA from Borreliella burgdorferi (strain ATCC 35210 / DSM 4680 / CIP 102532 / B31) (Borrelia burgdorferi).